A 300-amino-acid polypeptide reads, in one-letter code: Dihydroorotate dehydrogenase B (NAD(+)), catalytic subunit (300 aa).

FMN contacts are provided by residues Ser21 and 45 to 46 (KG). Residues Lys45 and 69–73 (NSIGL) each bind substrate. FMN contacts are provided by Asn99 and Asn126. Asn126 is a binding site for substrate. Cys129 serves as the catalytic Nucleophile. Residues Lys164 and Val190 each coordinate FMN. 191–192 (NT) contacts substrate. FMN-binding positions include Gly216, 242-243 (GG), and 264-265 (GT).

This sequence belongs to the dihydroorotate dehydrogenase family. Type 1 subfamily. Heterotetramer of 2 PyrK and 2 PyrD type B subunits. The cofactor is FMN.

It localises to the cytoplasm. It catalyses the reaction (S)-dihydroorotate + NAD(+) = orotate + NADH + H(+). Its pathway is pyrimidine metabolism; UMP biosynthesis via de novo pathway; orotate from (S)-dihydroorotate (NAD(+) route): step 1/1. Catalyzes the conversion of dihydroorotate to orotate with NAD(+) as electron acceptor. This chain is Dihydroorotate dehydrogenase B (NAD(+)), catalytic subunit (pyrD), found in Petrotoga mobilis (strain DSM 10674 / SJ95).